Here is a 91-residue protein sequence, read N- to C-terminus: MKKLFASLALAAAVAPVWAATQTVTLAVPGMTCAACPITVKKALSKVEGVSKVDVGFEKREAVVTFDDTKASVQKLTKATADAGYPSSVKQ.

The first 19 residues, 1 to 19 (MKKLFASLALAAAVAPVWA), serve as a signal peptide directing secretion. One can recognise an HMA domain in the interval 22–88 (QTVTLAVPGM…ATADAGYPSS (67 aa)). Hg(2+) contacts are provided by Cys33 and Cys36.

Belongs to the MerP family. In terms of assembly, monomer.

The protein resides in the periplasm. Its function is as follows. Involved in mercury resistance. Acts as a mercury scavenger that specifically binds to a mercuric ion in the periplasm and probably passes it to the cytoplasmic mercuric reductase MerA via the mercuric transport protein MerT. The chain is Mercuric transport protein periplasmic component from Shigella flexneri.